The chain runs to 334 residues: Methionine adenosyltransferase 2 subunit beta (334 aa).

NADP(+)-binding positions include 37-40, 60-62, 71-72, cysteine 93, arginine 97, tyrosine 159, and leucine 185; these read TGLL, FRR, and NL. A Phosphothreonine modification is found at threonine 309. Positions 319–334 are required for interaction with MAT2A; the sequence is LWPFLIDKRWRQTVFH.

Belongs to the dTDP-4-dehydrorhamnose reductase family. MAT2B subfamily. In terms of assembly, heterotrimer; composed of a catalytic MAT2A homodimer that binds one regulatory MAT2B chain. Heterohexamer; composed of a central, catalytic MAT2A homotetramer flanked on either side by a regulatory MAT2B chain. NADP binding increases the affinity for MAT2A.

Its pathway is amino-acid biosynthesis; S-adenosyl-L-methionine biosynthesis; S-adenosyl-L-methionine from L-methionine: step 1/1. In terms of biological role, regulatory subunit of S-adenosylmethionine synthetase 2, an enzyme that catalyzes the formation of S-adenosylmethionine from methionine and ATP. Regulates MAT2A catalytic activity by changing its kinetic properties, increasing its affinity for L-methionine. Can bind NADP (in vitro). This Rattus norvegicus (Rat) protein is Methionine adenosyltransferase 2 subunit beta (Mat2b).